Here is a 147-residue protein sequence, read N- to C-terminus: 3-dehydroquinate dehydratase (147 aa).

Tyr23 functions as the Proton acceptor in the catalytic mechanism. Positions 75, 81, and 88 each coordinate substrate. The Proton donor role is filled by His101. Substrate contacts are provided by residues 102–103 (LS) and Arg112.

Belongs to the type-II 3-dehydroquinase family. Homododecamer.

The catalysed reaction is 3-dehydroquinate = 3-dehydroshikimate + H2O. Its pathway is metabolic intermediate biosynthesis; chorismate biosynthesis; chorismate from D-erythrose 4-phosphate and phosphoenolpyruvate: step 3/7. Functionally, catalyzes a trans-dehydration via an enolate intermediate. This chain is 3-dehydroquinate dehydratase, found in Nitrosococcus oceani (strain ATCC 19707 / BCRC 17464 / JCM 30415 / NCIMB 11848 / C-107).